Here is a 357-residue protein sequence, read N- to C-terminus: UPF0283 membrane protein BMEA_A1074 (357 aa).

Residues 1–36 form a disordered region; that stretch reads MSDKTPRKPTAFRLEQPARVSAASEQEEPRRPRAVK. Positions 27–36 are enriched in basic and acidic residues; the sequence is EEPRRPRAVK. Helical transmembrane passes span 78–98 and 109–129; these read ILFG…TEDL and LGWT…AIIL.

The protein belongs to the UPF0283 family.

The protein localises to the cell inner membrane. This Brucella melitensis biotype 2 (strain ATCC 23457) protein is UPF0283 membrane protein BMEA_A1074.